Reading from the N-terminus, the 284-residue chain is D-tagatose-1,6-bisphosphate aldolase subunit GatY (284 aa).

The active-site Proton donor is D82. Zn(2+)-binding residues include H83 and H180. G181 serves as a coordination point for dihydroxyacetone phosphate. H208 serves as a coordination point for Zn(2+). Residues 209-211 (GAS) and 230-233 (NVAT) each bind dihydroxyacetone phosphate.

It belongs to the class II fructose-bisphosphate aldolase family. TagBP aldolase GatY subfamily. As to quaternary structure, forms a complex with GatZ. Requires Zn(2+) as cofactor.

It carries out the reaction D-tagatofuranose 1,6-bisphosphate = D-glyceraldehyde 3-phosphate + dihydroxyacetone phosphate. The protein operates within carbohydrate metabolism; D-tagatose 6-phosphate degradation; D-glyceraldehyde 3-phosphate and glycerone phosphate from D-tagatose 6-phosphate: step 2/2. Catalytic subunit of the tagatose-1,6-bisphosphate aldolase GatYZ, which catalyzes the reversible aldol condensation of dihydroxyacetone phosphate (DHAP or glycerone-phosphate) with glyceraldehyde 3-phosphate (G3P) to produce tagatose 1,6-bisphosphate (TBP). Requires GatZ subunit for full activity and stability. Is involved in the catabolism of galactitol. The protein is D-tagatose-1,6-bisphosphate aldolase subunit GatY of Escherichia coli O6:H1 (strain CFT073 / ATCC 700928 / UPEC).